The chain runs to 318 residues: Olfactory receptor 2T3 (318 aa).

Topologically, residues 1–30 (MCSGNQTSQNQTASTDFTLTGLFAESKHAA) are extracellular. Asn-5 and Asn-10 each carry an N-linked (GlcNAc...) asparagine glycan. A helical membrane pass occupies residues 31–54 (LLYTVTFLLFLMALTGNALLILLI). Over 55-62 (HSEPRLHT) the chain is Cytoplasmic. Residues 63–84 (PMYFFISQLALMDLMYLCVTVP) traverse the membrane as a helical segment. The Extracellular segment spans residues 85–105 (KMLVGQVTGDDTISPSGCGIQ). Cys-102 and Cys-194 form a disulfide bridge. Residues 106–125 (MFFYLTLAGAEVFLLAAMAY) form a helical membrane-spanning segment. Residues 126-144 (DRYAAVCRPLHYPLLMNQR) are Cytoplasmic-facing. The helical transmembrane segment at 145–163 (VCQLLVSACWVLGMVDGLL) threads the bilayer. At 164-200 (LTPITMSFPFCQSRKILSFFCETPALLKLSCSDVSLY) the chain is on the extracellular side. The chain crosses the membrane as a helical span at residues 201–224 (KTLMYLCCILMLLAPIMVISSSYT). Residues 225–241 (LILHLIHRMNSAAGHRK) lie on the Cytoplasmic side of the membrane. A helical membrane pass occupies residues 242–264 (ALATCSSHMIIVLLLFGASFYTY). Residues 265–277 (MLPSSYHTAEQDM) lie on the Extracellular side of the membrane. A helical transmembrane segment spans residues 278 to 297 (MVSAFYTIFTPVLNPLIYSL). The Cytoplasmic portion of the chain corresponds to 298 to 318 (RNKDVTRALRSMMQSRMNQEK).

The protein belongs to the G-protein coupled receptor 1 family.

The protein localises to the cell membrane. Odorant receptor. The polypeptide is Olfactory receptor 2T3 (OR2T3) (Homo sapiens (Human)).